Consider the following 242-residue polypeptide: uncharacterized protein (242 aa).

The 68-residue stretch at 2 to 69 (YRLAKIISNA…KPRLWIYYKP (68 aa)) folds into the S4 RNA-binding domain. The active-site Nucleophile is the D102.

Belongs to the pseudouridine synthase RsuA family.

The catalysed reaction is a uridine in RNA = a pseudouridine in RNA. This is an uncharacterized protein from Rickettsia typhi (strain ATCC VR-144 / Wilmington).